Consider the following 25-residue polypeptide: Kunitz-type serine protease inhibitor 2 (25 aa).

Residues 6-25 form the BPTI/Kunitz inhibitor domain; it reads VCELPKEVGGPCRGHIIPRY.

It localises to the secreted. Its function is as follows. Inhibits bovine trypsin, human plasma kallikrein and human neutrophil elastase. The sequence is that of Kunitz-type serine protease inhibitor 2 from Rhipicephalus microplus (Cattle tick).